A 1770-amino-acid polypeptide reads, in one-letter code: Transposon Ty2-GR1 Gag-Pol polyprotein (1770 aa).

Composition is skewed to polar residues over residues 1 to 11 (MESQQLHQNPH), 19 to 39 (ASVT…SASN), and 49 to 60 (KVNSQQETTPGT). Disordered regions lie at residues 1-86 (MESQ…GQYQ) and 360-453 (HSEY…LPDH). The tract at residues 295-397 (ENNINVSDRL…SSKPRAAKAH (103 aa)) is RNA-binding. Low complexity predominate over residues 369–381 (TSPNTTNTKVTTR). Positions 399 to 408 (IATSSKFSRV) are enriched in polar residues. The For protease activity; shared with dimeric partner role is filled by D457. The tract at residues 579-636 (NVNKSKSVNKYPYPLIHRMLGHANFRSIQKSLKKNAVTYLKESDIEWSNASTYQCPDC) is integrase-type zinc finger-like. The region spanning 656-831 (ESYEPFQYLH…AGLDITTILP (176 aa)) is the Integrase catalytic domain. The Mg(2+) site is built by D667 and D732. 4 disordered regions span residues 1004–1034 (MGGT…STNE), 1059–1135 (TEEP…KSSK), 1146–1165 (LPLP…VSKD), and 1170–1205 (HSRQ…TEIE). Polar residues-rich tracts occupy residues 1009–1034 (ESDT…STNE) and 1065–1082 (QRNS…STPS). Residues 1151–1165 (LTHKSPTDTSDVSKD) are compositionally biased toward basic and acidic residues. Positions 1193 to 1227 (KKRSLEDNETEIEVSRDTWNNKNMRSLEPPRSKKR) match the Bipartite nuclear localization signal motif. Residues 1353 to 1491 (NDYYITQLDI…DILGLEIKYQ (139 aa)) enclose the Reverse transcriptase Ty1/copia-type domain. Mg(2+) contacts are provided by D1361, D1442, D1443, D1625, E1667, and D1700. One can recognise an RNase H Ty1/copia-type domain in the interval 1625–1767 (DASYGNQPYY…IKTFKLLTNK (143 aa)).

In terms of assembly, the capsid protein forms a homotrimer, from which the VLPs are assembled. The protease is a homodimer, whose active site consists of two apposed aspartic acid residues. Initially, virus-like particles (VLPs) are composed of the structural unprocessed proteins Gag and Gag-Pol, and also contain the host initiator methionine tRNA (tRNA(i)-Met) which serves as a primer for minus-strand DNA synthesis, and a dimer of genomic Ty RNA. Processing of the polyproteins occurs within the particle and proceeds by an ordered pathway, called maturation. First, the protease (PR) is released by autocatalytic cleavage of the Gag-Pol polyprotein, and this cleavage is a prerequisite for subsequent processing at the remaining sites to release the mature structural and catalytic proteins. Maturation takes place prior to the RT reaction and is required to produce transposition-competent VLPs.

It is found in the cytoplasm. The protein localises to the nucleus. The enzyme catalyses DNA(n) + a 2'-deoxyribonucleoside 5'-triphosphate = DNA(n+1) + diphosphate. The catalysed reaction is Endonucleolytic cleavage to 5'-phosphomonoester.. Functionally, capsid protein (CA) is the structural component of the virus-like particle (VLP), forming the shell that encapsulates the retrotransposons dimeric RNA genome. The particles are assembled from trimer-clustered units and there are holes in the capsid shells that allow for the diffusion of macromolecules. CA also has nucleocapsid-like chaperone activity, promoting primer tRNA(i)-Met annealing to the multipartite primer-binding site (PBS), dimerization of Ty2 RNA and initiation of reverse transcription. The aspartyl protease (PR) mediates the proteolytic cleavages of the Gag and Gag-Pol polyproteins after assembly of the VLP. In terms of biological role, reverse transcriptase/ribonuclease H (RT) is a multifunctional enzyme that catalyzes the conversion of the retro-elements RNA genome into dsDNA within the VLP. The enzyme displays a DNA polymerase activity that can copy either DNA or RNA templates, and a ribonuclease H (RNase H) activity that cleaves the RNA strand of RNA-DNA heteroduplexes during plus-strand synthesis and hydrolyzes RNA primers. The conversion leads to a linear dsDNA copy of the retrotransposon that includes long terminal repeats (LTRs) at both ends. Its function is as follows. Integrase (IN) targets the VLP to the nucleus, where a subparticle preintegration complex (PIC) containing at least integrase and the newly synthesized dsDNA copy of the retrotransposon must transit the nuclear membrane. Once in the nucleus, integrase performs the integration of the dsDNA into the host genome. In Saccharomyces cerevisiae (strain ATCC 204508 / S288c) (Baker's yeast), this protein is Transposon Ty2-GR1 Gag-Pol polyprotein (TY2B-GR1).